A 471-amino-acid polypeptide reads, in one-letter code: Ubiquitin carboxyl-terminal hydrolase calypso (471 aa).

One can recognise a UCH catalytic domain in the interval 45-276; the sequence is GWLELESDPG…IRFNLMAVVP (232 aa). Residue Cys131 is the Nucleophile of the active site. Catalysis depends on His213, which acts as the Proton donor. A disordered region spans residues 307–326; sequence DEQGESGNGDSQRPDTPTTL. Residues 314–326 show a composition bias toward polar residues; that stretch reads NGDSQRPDTPTTL. A ULD domain is found at 375 to 403; the sequence is NYDKFICTFLSMLAHQGVLGELVSQHLLP. The interval 405–471 is positively charged C-terminal tail required for binding nucleosomes; that stretch reads KKVSGQGAAN…KGRNKCRKRK (67 aa). The disordered stretch occupies residues 412–471; it reads AANRISKQSNTASAGGSTTGASASTPKTQQQQAAAAKNGKSPSKTPGRRRKGRNKCRKRK. Low complexity predominate over residues 422–447; it reads TASAGGSTTGASASTPKTQQQQAAAA. The segment covering 457–471 has biased composition (basic residues); it reads PGRRRKGRNKCRKRK.

The protein belongs to the peptidase C12 family. BAP1 subfamily. In terms of assembly, catalytic component of the polycomb repressive deubiquitinase (PR-DUB) complex, at least composed of caly/calypso, Asx and sba (MBD5/6 homolog). The PR-DUB complex associates with nucleosomes to mediate deubiquitination of histone H2AK118ub1 substrates; the association requires the positively charged C-terminal tail of caly, probably due to direct binding of DNA. Interacts (via ULD domain) with Asx (via DEUBAD domain); the interaction produces a stable heterodimer with a composite binding site for ubiquitin. Homodimerizes (via coiled-coil hinge-region between the UCH and ULD domains) to mediate assembly of 2 copies of the caly-Asx heterodimer into a bisymmetric tetramer; dimerization enhances PR-DUB association with nucleosomes.

It is found in the nucleus. It carries out the reaction Thiol-dependent hydrolysis of ester, thioester, amide, peptide and isopeptide bonds formed by the C-terminal Gly of ubiquitin (a 76-residue protein attached to proteins as an intracellular targeting signal).. Catalytic component of the polycomb repressive deubiquitinase (PR-DUB) complex, a complex that specifically mediates deubiquitination of histone H2A monoubiquitinated at 'Lys-119' (H2AK118ub1). Mediates bisymmetric organization of the PR-DUB complex and is involved in association with nucleosomes to mediate deubiquitination. Does not deubiquitinate monoubiquitinated histone H2B. Required to maintain the transcriptionally repressive state of homeotic genes throughout development. The PR-DUB complex has weak or no activity toward 'Lys-48'- and 'Lys-63'-linked polyubiquitin chains. Polycomb group (PcG) protein. In Drosophila sechellia (Fruit fly), this protein is Ubiquitin carboxyl-terminal hydrolase calypso.